A 254-amino-acid polypeptide reads, in one-letter code: Large ribosomal subunit protein uL2B (254 aa).

A Glycyl lysine isopeptide (Lys-Gly) (interchain with G-Cter in ubiquitin) cross-link involves residue Lys-46. Ser-52 carries the post-translational modification Phosphoserine. Residue Lys-93 forms a Glycyl lysine isopeptide (Lys-Gly) (interchain with G-Cter in ubiquitin) linkage. The residue at position 95 (Ser-95) is a Phosphoserine. Residues Lys-119 and Lys-145 each participate in a glycyl lysine isopeptide (Lys-Gly) (interchain with G-Cter in ubiquitin) cross-link. 3 positions are modified to phosphoserine: Ser-159, Ser-160, and Ser-249.

The protein belongs to the universal ribosomal protein uL2 family. As to quaternary structure, component of the large ribosomal subunit (LSU). Mature yeast ribosomes consist of a small (40S) and a large (60S) subunit. The 40S small subunit contains 1 molecule of ribosomal RNA (18S rRNA) and 33 different proteins (encoded by 57 genes). The large 60S subunit contains 3 rRNA molecules (25S, 5.8S and 5S rRNA) and 46 different proteins (encoded by 81 genes).

Its subcellular location is the cytoplasm. Functionally, component of the ribosome, a large ribonucleoprotein complex responsible for the synthesis of proteins in the cell. The small ribosomal subunit (SSU) binds messenger RNAs (mRNAs) and translates the encoded message by selecting cognate aminoacyl-transfer RNA (tRNA) molecules. The large subunit (LSU) contains the ribosomal catalytic site termed the peptidyl transferase center (PTC), which catalyzes the formation of peptide bonds, thereby polymerizing the amino acids delivered by tRNAs into a polypeptide chain. The nascent polypeptides leave the ribosome through a tunnel in the LSU and interact with protein factors that function in enzymatic processing, targeting, and the membrane insertion of nascent chains at the exit of the ribosomal tunnel. This Saccharomyces cerevisiae (strain ATCC 204508 / S288c) (Baker's yeast) protein is Large ribosomal subunit protein uL2B.